The following is a 422-amino-acid chain: Glucose-1-phosphate adenylyltransferase (422 aa).

Alpha-D-glucose 1-phosphate-binding positions include Tyr-110, Gly-175, 190–191 (EK), and Ser-208.

Belongs to the bacterial/plant glucose-1-phosphate adenylyltransferase family. As to quaternary structure, homotetramer.

The catalysed reaction is alpha-D-glucose 1-phosphate + ATP + H(+) = ADP-alpha-D-glucose + diphosphate. It functions in the pathway glycan biosynthesis; glycogen biosynthesis. Functionally, involved in the biosynthesis of ADP-glucose, a building block required for the elongation reactions to produce glycogen. Catalyzes the reaction between ATP and alpha-D-glucose 1-phosphate (G1P) to produce pyrophosphate and ADP-Glc. The chain is Glucose-1-phosphate adenylyltransferase from Hydrogenovibrio crunogenus (strain DSM 25203 / XCL-2) (Thiomicrospira crunogena).